The chain runs to 143 residues: Large ribosomal subunit protein uL15 (143 aa).

Residues 20-52 (GRGIGSGKGKTAGRGHKGQHSRAGGYHKVGFEG) form a disordered region. Positions 30 to 39 (TAGRGHKGQH) are enriched in basic residues.

The protein belongs to the universal ribosomal protein uL15 family. As to quaternary structure, part of the 50S ribosomal subunit.

Its function is as follows. Binds to the 23S rRNA. The polypeptide is Large ribosomal subunit protein uL15 (Coxiella burnetii (strain CbuK_Q154) (Coxiella burnetii (strain Q154))).